A 297-amino-acid chain; its full sequence is Probable esterase afoC (297 aa).

The active-site Charge relay system is the serine 136. Over residues 204–217 the composition is skewed to low complexity; that stretch reads ASSSASASVSGSES. The disordered stretch occupies residues 204–226; sequence ASSSASASVSGSESAGEEEEDGH. Catalysis depends on charge relay system residues aspartate 240 and histidine 267.

This sequence belongs to the LovG family.

Probable esterase; part of the gene cluster that mediates the biosynthesis of asperfuranone, a probable antitumor agent. The polyketide synthase afoG is responsible for producing the 3,5-dimethyloctadienone moiety from acetyl-CoA, three malonyl-CoA, and two S-adenosyl methionines (SAM). The 3,5-dimethyloctadienone moiety is then loaded onto the SAT domain of afoE and extended with four malonyl-CoA and one SAM, which leads to the formation of 2,4-dihydroxy-6-(5,7-dimethyl-2-oxo-trans-3-trans-5-nonadienyl)-3-methylbenzaldehyde (compound 2) after reductive release and aldol condensation. AfoD is the next enzyme in the biosynthesis sequence and hydroxylates the side chain at the benzylic position of compound 2. After benzylic hydroxylation, a furan ring is formed after five-member ring hemiacetal formation and water elimination. AfoF and afoC are proposed to oxidize the R-diketone proton and to reduce the unconjugated carbonyl group, respectively, to generate asperfuranone. Since no intermediates could be isolated from afoF and afoC deletants, the sequence of these two enzymes is not fully understood. Moreover, since afoC deletant still produces a small amount of asperfuranone, other endogenous oxidoreductases might catalyze the same reaction with much less efficiency. The sequence is that of Probable esterase afoC from Emericella nidulans (strain FGSC A4 / ATCC 38163 / CBS 112.46 / NRRL 194 / M139) (Aspergillus nidulans).